A 687-amino-acid chain; its full sequence is MTAHAAALAAADAPAPVDRSPGALGWPVTAALRALAMDGVEQAKSGHPGAPMGMAEIAAVLWREHLRHNPADPSWPDRDRFVLSNGHGSMLIYALLHLTGYDLPIAELKRFRQLHSRTPGHPELGMTPGVETTTGPLGQGLANAVGMAIAEKTLAAQFNRPGLSIVDHRTFVFLGDGCLMEGVSHEACSLAGRLGLGKLVAFYDDNGISIDGKVEEWFPDDTPARFAAYGWHVIRNVDGHDPAMLRDAVEAALSETGKPTLICCKTTIGRGAPTKEGHQDTHGAPLGAEEIARTRAAMGWDHAPFEVPEDIYALWDARRSGAARQSAWDARMEAYERAYPAEAAEFRRRLKGDLSPAFAATYAAALKATVEKAETVATRKASQLALAALAPAVPEFLGGSADLAHSNLTTFPGAVPITRDPAGNQIFYGVREFGMSAIANGIALHGGFIPFVATFLVFSDYARNAMRMSALMGQRVIYILTHDSIGLGEDGPTHQPVEHVESLRLIPNLDVWRPADTVETLAAWHAALTRTNGPSAFILSRQNLPCWPRDAAQIEGIEAGAYVLRESEGLARAVLVATGSEVKLAAAAADLLDTAGIPTRIVSMPCRERFEALTETERAALFPKGVPVVAVEAGVTRGWRGLSGTRADGIIAIGIDRFGESAPEKDLWPLFGFTPEAVADAVRRAVG.

Histidine 47 contacts substrate. Thiamine diphosphate is bound by residues histidine 87 and 135 to 137 (GPL). Aspartate 176 lines the Mg(2+) pocket. Thiamine diphosphate contacts are provided by glycine 177 and asparagine 206. Asparagine 206 and isoleucine 208 together coordinate Mg(2+). Histidine 282, arginine 379, and serine 406 together coordinate substrate. Residue histidine 282 coordinates thiamine diphosphate. Glutamate 432 acts as the Proton donor in catalysis. Residue phenylalanine 458 coordinates thiamine diphosphate. The substrate site is built by histidine 482, aspartate 490, histidine 494, and arginine 541.

Belongs to the transketolase family. Mg(2+) is required as a cofactor. It depends on thiamine diphosphate as a cofactor.

It carries out the reaction D-sedoheptulose 7-phosphate + D-glyceraldehyde 3-phosphate = aldehydo-D-ribose 5-phosphate + D-xylulose 5-phosphate. Activity is increased sixfold following autotrophic growth on methanol compared with that of heterotrophically grown cells. In terms of biological role, catalyzes the transfer of a two-carbon ketol group from a ketose donor to an aldose acceptor, via a covalent intermediate with the cofactor thiamine pyrophosphate. The chain is Transketolase 2 from Xanthobacter flavus.